The following is a 435-amino-acid chain: 5-methylthioadenosine/S-adenosylhomocysteine deaminase (435 aa).

Residues H65 and H67 each coordinate Zn(2+). E94, R150, and H189 together coordinate substrate. H216 is a binding site for Zn(2+). The substrate site is built by E219 and D304. Residue D304 coordinates Zn(2+).

This sequence belongs to the metallo-dependent hydrolases superfamily. MTA/SAH deaminase family. Requires Zn(2+) as cofactor.

It carries out the reaction S-adenosyl-L-homocysteine + H2O + H(+) = S-inosyl-L-homocysteine + NH4(+). The enzyme catalyses S-methyl-5'-thioadenosine + H2O + H(+) = S-methyl-5'-thioinosine + NH4(+). Catalyzes the deamination of 5-methylthioadenosine and S-adenosyl-L-homocysteine into 5-methylthioinosine and S-inosyl-L-homocysteine, respectively. Is also able to deaminate adenosine. In Bacillus cereus (strain ATCC 14579 / DSM 31 / CCUG 7414 / JCM 2152 / NBRC 15305 / NCIMB 9373 / NCTC 2599 / NRRL B-3711), this protein is 5-methylthioadenosine/S-adenosylhomocysteine deaminase.